Here is a 547-residue protein sequence, read N- to C-terminus: Chaperonin GroEL (547 aa).

ATP-binding positions include 30–33, K51, 87–91, G415, 480–482, and D496; these read TLGP, DGTTT, and NAA. Residues 525-547 are disordered; it reads KPDDKPAMPPMGGGMGGMGGMDF. Positions 535–547 are enriched in gly residues; that stretch reads MGGGMGGMGGMDF.

This sequence belongs to the chaperonin (HSP60) family. As to quaternary structure, forms a cylinder of 14 subunits composed of two heptameric rings stacked back-to-back. Interacts with the co-chaperonin GroES.

The protein localises to the cytoplasm. The enzyme catalyses ATP + H2O + a folded polypeptide = ADP + phosphate + an unfolded polypeptide.. Functionally, together with its co-chaperonin GroES, plays an essential role in assisting protein folding. The GroEL-GroES system forms a nano-cage that allows encapsulation of the non-native substrate proteins and provides a physical environment optimized to promote and accelerate protein folding. This chain is Chaperonin GroEL, found in Novosphingobium aromaticivorans (strain ATCC 700278 / DSM 12444 / CCUG 56034 / CIP 105152 / NBRC 16084 / F199).